The sequence spans 349 residues: Alcohol dehydrogenase 1 (349 aa).

C46, H69, C100, C103, C106, C114, and C156 together coordinate Zn(2+). NAD(+)-binding positions include G180–G186, D204, K208, V270–L272, and R342.

The protein belongs to the zinc-containing alcohol dehydrogenase family. In terms of assembly, homotetramer. Zn(2+) is required as a cofactor.

It carries out the reaction a primary alcohol + NAD(+) = an aldehyde + NADH + H(+). The enzyme catalyses a secondary alcohol + NAD(+) = a ketone + NADH + H(+). The protein is Alcohol dehydrogenase 1 of Caenorhabditis elegans.